Reading from the N-terminus, the 887-residue chain is UPF0182 protein CTC_00086 (887 aa).

The next 7 membrane-spanning stretches (helical) occupy residues 9–29, 47–67, 87–107, 146–166, 195–215, 242–262, and 266–286; these read FIAIIILLLILFLYRSTSFII, FFTIGKLFTLSFALIFISIWL, LMIAFNCIVSSLFAYFFSSKY, VLILRVLVFLVIYTLILYFII, GKQLAVVSAIILLFLSMGYII, IYRIIIIVSFIGSIVVFISII, and IKPIIISLVLIFLLILSEGAT.

This sequence belongs to the UPF0182 family.

The protein resides in the cell membrane. The sequence is that of UPF0182 protein CTC_00086 from Clostridium tetani (strain Massachusetts / E88).